The following is a 468-amino-acid chain: Glutamate--tRNA ligase (468 aa).

The short motif at 8–18 (PSPTGFLHVGG) is the 'HIGH' region element. Residues C97, C99, C124, and D126 each contribute to the Zn(2+) site. Residues 236 to 240 (KLSKR) carry the 'KMSKS' region motif. Residue K239 coordinates ATP.

Belongs to the class-I aminoacyl-tRNA synthetase family. Glutamate--tRNA ligase type 1 subfamily. In terms of assembly, monomer. Requires Zn(2+) as cofactor.

The protein resides in the cytoplasm. It carries out the reaction tRNA(Glu) + L-glutamate + ATP = L-glutamyl-tRNA(Glu) + AMP + diphosphate. Its function is as follows. Catalyzes the attachment of glutamate to tRNA(Glu) in a two-step reaction: glutamate is first activated by ATP to form Glu-AMP and then transferred to the acceptor end of tRNA(Glu). In Francisella tularensis subsp. mediasiatica (strain FSC147), this protein is Glutamate--tRNA ligase.